The chain runs to 372 residues: Cell division protein FtsZ 1 (372 aa).

GTP contacts are provided by residues 51–55, 138–140, E169, R173, and D216; these read GAGCN and GTG. The disordered stretch occupies residues 351–372; that stretch reads QEETPEPSEEEVPPVKIDIPEL. Positions 353-362 are enriched in acidic residues; the sequence is ETPEPSEEEV.

Belongs to the FtsZ family. Homodimer. Polymerizes to form a dynamic ring structure in a strictly GTP-dependent manner. Interacts directly with several other division proteins.

The protein resides in the cytoplasm. Essential cell division protein that forms a contractile ring structure (Z ring) at the future cell division site. The regulation of the ring assembly controls the timing and the location of cell division. One of the functions of the FtsZ ring is to recruit other cell division proteins to the septum to produce a new cell wall between the dividing cells. Binds GTP and shows GTPase activity. The sequence is that of Cell division protein FtsZ 1 from Pyrococcus abyssi (strain GE5 / Orsay).